The sequence spans 405 residues: CMP-sialic acid transporter 4 (405 aa).

Topologically, residues 1–43 (MQRNGVMECSVCHSKVVAPSPRSVSRAYDKHRSKISSKYRALN) are cytoplasmic. Residues 44–64 (FLLVSGDCILVGLQPILVFMS) form a helical membrane-spanning segment. Over 65 to 74 (KVDGKFQFSP) the chain is Lumenal. A helical membrane pass occupies residues 75–95 (ISVNFLTEVTKVIFAIVMLII). The Cytoplasmic segment spans residues 96–121 (QSRKQKVGEKPLLSLSTFVQAARNNA). A helical membrane pass occupies residues 122-142 (LLAVPALLYAINNYLKFIMQL). Position 143 (Tyr-143) is a topological domain, lumenal. Residues 144–164 (FSPATVKMLSNLKVLVIAILL) traverse the membrane as a helical segment. Residues 165–171 (KFIMRRK) are Cytoplasmic-facing. A helical transmembrane segment spans residues 172–192 (FSIIQWEALALLLIGISVNQL). At 193-203 (SSIPDGTKSFG) the chain is on the lumenal side. Residues 204–224 (LAVTTIAYIYTLIFVTVPSLA) traverse the membrane as a helical segment. At 225 to 244 (SVYNEYALKSQFDTSIYLQN) the chain is on the cytoplasmic side. A helical membrane pass occupies residues 245 to 265 (LFLYGYGAIFNFLGILGTVIF). At 266–281 (QGPESFDILRGHSRAT) the chain is on the lumenal side. Residues 282–302 (MFLICNNAAQGILSSFFFKYA) form a helical membrane-spanning segment. Topologically, residues 303–322 (DTILKKYSSTVATIFTGLAS) are cytoplasmic. Residues 323 to 343 (AAFLGHTLTVNFLLGISIVFI) form a helical membrane-spanning segment. At 344 to 405 (SMHQFFSPLA…TDERKPLLPI (62 aa)) the chain is on the lumenal side.

The protein belongs to the nucleotide-sugar transporter family. CMP-Sialate:CMP antiporter (TC 2.A.7.12) subfamily.

Its subcellular location is the golgi apparatus membrane. Its function is as follows. Sugar transporter involved in the transport of CMP-sialic acid from the cytoplasm into the Golgi. May transport important nucleotide sugars such as CMP-Kdo (2-keto-3-deoxy-D-manno-octulosonic acid) in physiological conditions. The polypeptide is CMP-sialic acid transporter 4 (Oryza sativa subsp. japonica (Rice)).